Consider the following 151-residue polypeptide: Nucleoside diphosphate kinase (151 aa).

Residues Lys-11, Phe-59, Arg-87, Thr-93, Arg-104, and Asn-114 each coordinate ATP. The Pros-phosphohistidine intermediate role is filled by His-117.

This sequence belongs to the NDK family. In terms of assembly, homotetramer. The cofactor is Mg(2+).

It is found in the cytoplasm. The enzyme catalyses a 2'-deoxyribonucleoside 5'-diphosphate + ATP = a 2'-deoxyribonucleoside 5'-triphosphate + ADP. It carries out the reaction a ribonucleoside 5'-diphosphate + ATP = a ribonucleoside 5'-triphosphate + ADP. Its function is as follows. Major role in the synthesis of nucleoside triphosphates other than ATP. The ATP gamma phosphate is transferred to the NDP beta phosphate via a ping-pong mechanism, using a phosphorylated active-site intermediate. This is Nucleoside diphosphate kinase from Prochlorococcus marinus (strain MIT 9211).